Reading from the N-terminus, the 261-residue chain is Ribosomal RNA large subunit methyltransferase E (261 aa).

Residues Gly-81, Trp-83, Asp-104, Asp-120, and Asp-144 each contribute to the S-adenosyl-L-methionine site. Lys-184 functions as the Proton acceptor in the catalytic mechanism. The interval 233–261 is disordered; it reads GNALGHEVEDDGPMPHDPREDATADEDQD. Residues 245 to 254 show a composition bias toward basic and acidic residues; it reads PMPHDPREDA.

It belongs to the class I-like SAM-binding methyltransferase superfamily. RNA methyltransferase RlmE family.

It is found in the cytoplasm. It carries out the reaction uridine(2552) in 23S rRNA + S-adenosyl-L-methionine = 2'-O-methyluridine(2552) in 23S rRNA + S-adenosyl-L-homocysteine + H(+). Functionally, specifically methylates the uridine in position 2552 of 23S rRNA at the 2'-O position of the ribose in the fully assembled 50S ribosomal subunit. This Allorhizobium ampelinum (strain ATCC BAA-846 / DSM 112012 / S4) (Agrobacterium vitis (strain S4)) protein is Ribosomal RNA large subunit methyltransferase E.